We begin with the raw amino-acid sequence, 131 residues long: Large ribosomal subunit protein bL19 (131 aa).

Belongs to the bacterial ribosomal protein bL19 family.

Functionally, this protein is located at the 30S-50S ribosomal subunit interface and may play a role in the structure and function of the aminoacyl-tRNA binding site. The protein is Large ribosomal subunit protein bL19 of Caulobacter sp. (strain K31).